Consider the following 522-residue polypeptide: Neuropeptide FF receptor 2 (522 aa).

Topologically, residues Met-1–Ala-147 are extracellular. A disordered region spans residues Lys-25–Glu-49. 3 N-linked (GlcNAc...) asparagine glycosylation sites follow: Asn-110, Asn-122, and Asn-133. A helical membrane pass occupies residues Ala-148 to Val-168. Residues Cys-169 to Leu-184 are Cytoplasmic-facing. Residues Phe-185 to Leu-205 form a helical membrane-spanning segment. Residues Leu-206–Lys-221 lie on the Extracellular side of the membrane. A disulfide bond links Cys-220 and Cys-308. Residues Ile-222–Ala-242 form a helical membrane-spanning segment. Residues Val-243–Ala-262 are Cytoplasmic-facing. The chain crosses the membrane as a helical span at residues Phe-263–Met-283. Topologically, residues Leu-284–Lys-319 are extracellular. Asn-300 carries N-linked (GlcNAc...) asparagine glycosylation. A helical membrane pass occupies residues Ile-320–Met-340. The Cytoplasmic portion of the chain corresponds to Tyr-341–Met-377. Residues Leu-378 to Leu-398 form a helical membrane-spanning segment. Residues Ser-399 to Asn-413 lie on the Extracellular side of the membrane. A helical transmembrane segment spans residues Ile-414–Ile-434. The Cytoplasmic portion of the chain corresponds to Tyr-435 to Ile-522.

This sequence belongs to the G-protein coupled receptor 1 family. In terms of tissue distribution, isoform 1 is abundant in placenta. Relatively highly expressed in thymus, testis, and small intestine. Expressed at low levels in several tissues including spleen, prostate, brain, heart, ovary, colon, kidney, lung, liver and pancreas and not expressed in skeletal muscle and leukocytes. Isoform 2 expression is highest in placenta (but at relatively low level compared to isoform 1). Very low level of expression in numerous tissues including adipose tissue and many brain regions. Isoform 3 is expressed in brain and heart and, at lower levels, in kidney, liver, lung and pancreas.

The protein resides in the cell membrane. Its function is as follows. Receptor for NPAF (A-18-F-amide) and NPFF (F-8-F-amide) neuropeptides, also known as morphine-modulating peptides. Can also be activated by a variety of naturally occurring or synthetic FMRF-amide like ligands. This receptor mediates its action by association with G proteins that activate a phosphatidylinositol-calcium second messenger system. This Homo sapiens (Human) protein is Neuropeptide FF receptor 2.